A 719-amino-acid polypeptide reads, in one-letter code: Polyribonucleotide nucleotidyltransferase (719 aa).

The Mg(2+) site is built by aspartate 507 and aspartate 513. The 61-residue stretch at 573-633 (PKLELFSVDP…EQIKAAKDYI (61 aa)) folds into the KH domain. In terms of domain architecture, S1 motif spans 658–719 (GQEFQGIVKK…NGKISVDLCE (62 aa)).

Belongs to the polyribonucleotide nucleotidyltransferase family. Mg(2+) is required as a cofactor.

It localises to the cytoplasm. The enzyme catalyses RNA(n+1) + phosphate = RNA(n) + a ribonucleoside 5'-diphosphate. In terms of biological role, involved in mRNA degradation. Catalyzes the phosphorolysis of single-stranded polyribonucleotides processively in the 3'- to 5'-direction. The protein is Polyribonucleotide nucleotidyltransferase of Campylobacter jejuni subsp. jejuni serotype O:2 (strain ATCC 700819 / NCTC 11168).